A 358-amino-acid chain; its full sequence is Histidinol-phosphate aminotransferase (358 aa).

Position 217 is an N6-(pyridoxal phosphate)lysine (lysine 217).

Belongs to the class-II pyridoxal-phosphate-dependent aminotransferase family. Histidinol-phosphate aminotransferase subfamily. In terms of assembly, homodimer. The cofactor is pyridoxal 5'-phosphate.

The catalysed reaction is L-histidinol phosphate + 2-oxoglutarate = 3-(imidazol-4-yl)-2-oxopropyl phosphate + L-glutamate. The protein operates within amino-acid biosynthesis; L-histidine biosynthesis; L-histidine from 5-phospho-alpha-D-ribose 1-diphosphate: step 7/9. This is Histidinol-phosphate aminotransferase from Ruminiclostridium cellulolyticum (strain ATCC 35319 / DSM 5812 / JCM 6584 / H10) (Clostridium cellulolyticum).